Reading from the N-terminus, the 216-residue chain is Imidazole glycerol phosphate synthase subunit HisH (216 aa).

One can recognise a Glutamine amidotransferase type-1 domain in the interval 2-216 (RVAIIDYGSG…LITNFLRWRP (215 aa)). Cys-88 functions as the Nucleophile in the catalytic mechanism. Active-site residues include His-196 and Glu-198.

As to quaternary structure, heterodimer of HisH and HisF.

The protein localises to the cytoplasm. It carries out the reaction 5-[(5-phospho-1-deoxy-D-ribulos-1-ylimino)methylamino]-1-(5-phospho-beta-D-ribosyl)imidazole-4-carboxamide + L-glutamine = D-erythro-1-(imidazol-4-yl)glycerol 3-phosphate + 5-amino-1-(5-phospho-beta-D-ribosyl)imidazole-4-carboxamide + L-glutamate + H(+). The catalysed reaction is L-glutamine + H2O = L-glutamate + NH4(+). The protein operates within amino-acid biosynthesis; L-histidine biosynthesis; L-histidine from 5-phospho-alpha-D-ribose 1-diphosphate: step 5/9. In terms of biological role, IGPS catalyzes the conversion of PRFAR and glutamine to IGP, AICAR and glutamate. The HisH subunit catalyzes the hydrolysis of glutamine to glutamate and ammonia as part of the synthesis of IGP and AICAR. The resulting ammonia molecule is channeled to the active site of HisF. This Mesorhizobium japonicum (strain LMG 29417 / CECT 9101 / MAFF 303099) (Mesorhizobium loti (strain MAFF 303099)) protein is Imidazole glycerol phosphate synthase subunit HisH.